The following is a 251-amino-acid chain: Imidazole glycerol phosphate synthase subunit HisF (251 aa).

Residues D11 and D130 contribute to the active site.

It belongs to the HisA/HisF family. In terms of assembly, heterodimer of HisH and HisF.

Its subcellular location is the cytoplasm. It carries out the reaction 5-[(5-phospho-1-deoxy-D-ribulos-1-ylimino)methylamino]-1-(5-phospho-beta-D-ribosyl)imidazole-4-carboxamide + L-glutamine = D-erythro-1-(imidazol-4-yl)glycerol 3-phosphate + 5-amino-1-(5-phospho-beta-D-ribosyl)imidazole-4-carboxamide + L-glutamate + H(+). It participates in amino-acid biosynthesis; L-histidine biosynthesis; L-histidine from 5-phospho-alpha-D-ribose 1-diphosphate: step 5/9. Functionally, IGPS catalyzes the conversion of PRFAR and glutamine to IGP, AICAR and glutamate. The HisF subunit catalyzes the cyclization activity that produces IGP and AICAR from PRFAR using the ammonia provided by the HisH subunit. This chain is Imidazole glycerol phosphate synthase subunit HisF, found in Phocaeicola vulgatus (strain ATCC 8482 / DSM 1447 / JCM 5826 / CCUG 4940 / NBRC 14291 / NCTC 11154) (Bacteroides vulgatus).